The following is a 443-amino-acid chain: Na(+)-translocating ferredoxin:NAD(+) oxidoreductase complex subunit C (443 aa).

4Fe-4S ferredoxin-type domains are found at residues 359–391 and 398–428; these read ESAKIATPSNCIHCGKCVGVCPIHLQPLNIAEY and DKCESNNAMDCIECGSCSYICPAKRTLVSSI. 8 residues coordinate [4Fe-4S] cluster: C369, C372, C375, C379, C408, C411, C414, and C418.

The protein belongs to the 4Fe4S bacterial-type ferredoxin family. RnfC subfamily. As to quaternary structure, the complex is composed of six subunits: RnfA, RnfB, RnfC, RnfD, RnfE and RnfG. [4Fe-4S] cluster is required as a cofactor.

The protein localises to the cell membrane. It carries out the reaction 2 reduced [2Fe-2S]-[ferredoxin] + Na(+)(in) + NAD(+) + H(+) = 2 oxidized [2Fe-2S]-[ferredoxin] + Na(+)(out) + NADH. Functionally, part of a membrane-bound complex that couples electron transfer with translocation of ions across the membrane. Couples electron transfer from reduced ferredoxin to NAD(+) with electrogenic movement of Na(+) out of the cell. Involved in caffeate respiration. The protein is Na(+)-translocating ferredoxin:NAD(+) oxidoreductase complex subunit C of Acetobacterium woodii (strain ATCC 29683 / DSM 1030 / JCM 2381 / KCTC 1655 / WB1).